Reading from the N-terminus, the 183-residue chain is Large ribosomal subunit protein uL6 (183 aa).

Belongs to the universal ribosomal protein uL6 family. As to quaternary structure, part of the 50S ribosomal subunit.

This protein binds to the 23S rRNA, and is important in its secondary structure. It is located near the subunit interface in the base of the L7/L12 stalk, and near the tRNA binding site of the peptidyltransferase center. The polypeptide is Large ribosomal subunit protein uL6 (Chlamydia felis (strain Fe/C-56) (Chlamydophila felis)).